Here is a 100-residue protein sequence, read N- to C-terminus: NADH-quinone oxidoreductase subunit K (100 aa).

The next 3 helical transmembrane spans lie at 4–24, 28–48, and 60–80; these read LQHG…GLVI, LLFM…AFVV, and VMYI…LALL.

This sequence belongs to the complex I subunit 4L family. As to quaternary structure, NDH-1 is composed of 13 different subunits. Subunits NuoA, H, J, K, L, M, N constitute the membrane sector of the complex.

It localises to the cell inner membrane. The catalysed reaction is a quinone + NADH + 5 H(+)(in) = a quinol + NAD(+) + 4 H(+)(out). Functionally, NDH-1 shuttles electrons from NADH, via FMN and iron-sulfur (Fe-S) centers, to quinones in the respiratory chain. The immediate electron acceptor for the enzyme in this species is believed to be ubiquinone. Couples the redox reaction to proton translocation (for every two electrons transferred, four hydrogen ions are translocated across the cytoplasmic membrane), and thus conserves the redox energy in a proton gradient. In Shigella boydii serotype 18 (strain CDC 3083-94 / BS512), this protein is NADH-quinone oxidoreductase subunit K.